We begin with the raw amino-acid sequence, 185 residues long: Riboflavin kinase (185 aa).

The Mg(2+) site is built by Thr41 and Asn43. Catalysis depends on Glu122, which acts as the Nucleophile.

This sequence belongs to the flavokinase family. The cofactor is Zn(2+). It depends on Mg(2+) as a cofactor.

The catalysed reaction is riboflavin + ATP = FMN + ADP + H(+). The protein operates within cofactor biosynthesis; FMN biosynthesis; FMN from riboflavin (ATP route): step 1/1. Functionally, catalyzes the phosphorylation of riboflavin (vitamin B2) to form flavin mononucleotide (FMN) coenzyme. This is Riboflavin kinase (FMN1) from Kluyveromyces lactis (strain ATCC 8585 / CBS 2359 / DSM 70799 / NBRC 1267 / NRRL Y-1140 / WM37) (Yeast).